We begin with the raw amino-acid sequence, 420 residues long: Glucose-1-phosphate adenylyltransferase (420 aa).

Alpha-D-glucose 1-phosphate-binding positions include Tyr-107, Gly-173, 188 to 189 (EK), and Ser-206.

This sequence belongs to the bacterial/plant glucose-1-phosphate adenylyltransferase family. As to quaternary structure, homotetramer.

It carries out the reaction alpha-D-glucose 1-phosphate + ATP + H(+) = ADP-alpha-D-glucose + diphosphate. It participates in glycan biosynthesis; glycogen biosynthesis. Functionally, involved in the biosynthesis of ADP-glucose, a building block required for the elongation reactions to produce glycogen. Catalyzes the reaction between ATP and alpha-D-glucose 1-phosphate (G1P) to produce pyrophosphate and ADP-Glc. The sequence is that of Glucose-1-phosphate adenylyltransferase from Shewanella baltica (strain OS155 / ATCC BAA-1091).